The sequence spans 336 residues: UDP-3-O-acylglucosamine N-acyltransferase (336 aa).

The active-site Proton acceptor is the His-233.

Belongs to the transferase hexapeptide repeat family. LpxD subfamily. In terms of assembly, homotrimer.

The catalysed reaction is a UDP-3-O-[(3R)-3-hydroxyacyl]-alpha-D-glucosamine + a (3R)-hydroxyacyl-[ACP] = a UDP-2-N,3-O-bis[(3R)-3-hydroxyacyl]-alpha-D-glucosamine + holo-[ACP] + H(+). The protein operates within bacterial outer membrane biogenesis; LPS lipid A biosynthesis. Its function is as follows. Catalyzes the N-acylation of UDP-3-O-acylglucosamine using 3-hydroxyacyl-ACP as the acyl donor. Is involved in the biosynthesis of lipid A, a phosphorylated glycolipid that anchors the lipopolysaccharide to the outer membrane of the cell. The chain is UDP-3-O-acylglucosamine N-acyltransferase from Helicobacter pylori (strain ATCC 700392 / 26695) (Campylobacter pylori).